Reading from the N-terminus, the 429-residue chain is MSSIQASRGTRDILPEEIVYWQRVEAMARQILQRAAYQEIRTPMFEQTALFERGIGEATDIVGKEMYTFLDRGERSLTLRPEGTAGVVRALIEHKLFAQGGVQRLWYTGPMFRYERPQAGRQRQFHQLGVEVLGSADPRADAEVIAIATDLLQQLRLTDWTLMLNSVGNQEDRQRYRQALVDYLTPYQAELDPDSQERLHRNPLRILDSKDQRTQEICQQAPQILNYLGETSRQHFDRVQQSLTDLGIPYELNHRLVRGLDYYTHTAFEFQTTELGAQATVCGGGRYDRLVTELGGPDTPAVGWAIGLERLILLLQHQNISYEAKPDFYLVAKGEVAEPQALILAQKLRHHGFVVELDLSGSAFGKQLKRADRSGAPLCLILGDAEAEAQTVQLKWLASGEQEVLSQTDLLDRSNLLRQKIADSYSLKT.

This sequence belongs to the class-II aminoacyl-tRNA synthetase family. Homodimer.

Its subcellular location is the cytoplasm. It catalyses the reaction tRNA(His) + L-histidine + ATP = L-histidyl-tRNA(His) + AMP + diphosphate + H(+). The sequence is that of Histidine--tRNA ligase from Cyanothece sp. (strain PCC 7425 / ATCC 29141).